We begin with the raw amino-acid sequence, 88 residues long: Meiosis expressed gene 1 protein homolog (88 aa).

This sequence belongs to the MEIG1 family. Interacts with PACRG. Interacts with MORN3.

In terms of biological role, essential for spermiogenesis. This is Meiosis expressed gene 1 protein homolog from Homo sapiens (Human).